The chain runs to 1161 residues: ATP-dependent helicase/deoxyribonuclease subunit B (1161 aa).

This sequence belongs to the helicase family. AddB/RexB type 2 subfamily. As to quaternary structure, heterodimer of AddA and RexB. Requires Mg(2+) as cofactor.

In terms of biological role, the heterodimer acts as both an ATP-dependent DNA helicase and an ATP-dependent, dual-direction single-stranded exonuclease. Recognizes the chi site generating a DNA molecule suitable for the initiation of homologous recombination. This subunit has 5' -&gt; 3' nuclease activity but not helicase activity. In Oenococcus oeni (strain ATCC BAA-331 / PSU-1), this protein is ATP-dependent helicase/deoxyribonuclease subunit B.